We begin with the raw amino-acid sequence, 150 residues long: Protein-export protein SecB (150 aa).

The protein belongs to the SecB family. As to quaternary structure, homotetramer, a dimer of dimers. One homotetramer interacts with 1 SecA dimer.

It localises to the cytoplasm. Its function is as follows. One of the proteins required for the normal export of preproteins out of the cell cytoplasm. It is a molecular chaperone that binds to a subset of precursor proteins, maintaining them in a translocation-competent state. It also specifically binds to its receptor SecA. The sequence is that of Protein-export protein SecB from Polaromonas sp. (strain JS666 / ATCC BAA-500).